We begin with the raw amino-acid sequence, 193 residues long: Orotate phosphoribosyltransferase (193 aa).

Residues R107, K108, K111, H113, and E133 to S141 contribute to the 5-phospho-alpha-D-ribose 1-diphosphate site. T137 and R165 together coordinate orotate.

The protein belongs to the purine/pyrimidine phosphoribosyltransferase family. PyrE subfamily. Homodimer. Mg(2+) serves as cofactor.

The enzyme catalyses orotidine 5'-phosphate + diphosphate = orotate + 5-phospho-alpha-D-ribose 1-diphosphate. Its pathway is pyrimidine metabolism; UMP biosynthesis via de novo pathway; UMP from orotate: step 1/2. In terms of biological role, catalyzes the transfer of a ribosyl phosphate group from 5-phosphoribose 1-diphosphate to orotate, leading to the formation of orotidine monophosphate (OMP). This is Orotate phosphoribosyltransferase from Rhodopirellula baltica (strain DSM 10527 / NCIMB 13988 / SH1).